The chain runs to 425 residues: Serine--tRNA ligase (425 aa).

L-serine is bound at residue 231 to 233; sequence TAE. 262–264 provides a ligand contact to ATP; it reads RSE. Residue glutamate 285 coordinates L-serine. ATP is bound at residue 349-352; that stretch reads EISS. Serine 385 serves as a coordination point for L-serine.

It belongs to the class-II aminoacyl-tRNA synthetase family. Type-1 seryl-tRNA synthetase subfamily. As to quaternary structure, homodimer. The tRNA molecule binds across the dimer.

It localises to the cytoplasm. It catalyses the reaction tRNA(Ser) + L-serine + ATP = L-seryl-tRNA(Ser) + AMP + diphosphate + H(+). The enzyme catalyses tRNA(Sec) + L-serine + ATP = L-seryl-tRNA(Sec) + AMP + diphosphate + H(+). It functions in the pathway aminoacyl-tRNA biosynthesis; selenocysteinyl-tRNA(Sec) biosynthesis; L-seryl-tRNA(Sec) from L-serine and tRNA(Sec): step 1/1. Functionally, catalyzes the attachment of serine to tRNA(Ser). Is also able to aminoacylate tRNA(Sec) with serine, to form the misacylated tRNA L-seryl-tRNA(Sec), which will be further converted into selenocysteinyl-tRNA(Sec). In Bartonella quintana (strain Toulouse) (Rochalimaea quintana), this protein is Serine--tRNA ligase.